Consider the following 271-residue polypeptide: Aminoglycoside 3'-phosphotransferase (271 aa).

Aspartate 198 functions as the Proton acceptor in the catalytic mechanism.

Belongs to the aminoglycoside phosphotransferase family.

The catalysed reaction is kanamycin A + ATP = kanamycin 3'-phosphate + ADP + H(+). Functionally, resistance to kanamycin and structurally-related aminoglycosides, including amikacin. In Escherichia coli, this protein is Aminoglycoside 3'-phosphotransferase (aphA).